The chain runs to 90 residues: Co-chaperonin GroES (90 aa).

It belongs to the GroES chaperonin family. In terms of assembly, heptamer of 7 subunits arranged in a ring. Interacts with the chaperonin GroEL.

The protein localises to the cytoplasm. Together with the chaperonin GroEL, plays an essential role in assisting protein folding. The GroEL-GroES system forms a nano-cage that allows encapsulation of the non-native substrate proteins and provides a physical environment optimized to promote and accelerate protein folding. GroES binds to the apical surface of the GroEL ring, thereby capping the opening of the GroEL channel. This chain is Co-chaperonin GroES, found in Thermosipho melanesiensis (strain DSM 12029 / CIP 104789 / BI429).